An 88-amino-acid chain; its full sequence is Exodeoxyribonuclease 7 small subunit (88 aa).

This sequence belongs to the XseB family. In terms of assembly, heterooligomer composed of large and small subunits.

The protein resides in the cytoplasm. It catalyses the reaction Exonucleolytic cleavage in either 5'- to 3'- or 3'- to 5'-direction to yield nucleoside 5'-phosphates.. Functionally, bidirectionally degrades single-stranded DNA into large acid-insoluble oligonucleotides, which are then degraded further into small acid-soluble oligonucleotides. The chain is Exodeoxyribonuclease 7 small subunit from Bordetella petrii (strain ATCC BAA-461 / DSM 12804 / CCUG 43448).